Here is a 374-residue protein sequence, read N- to C-terminus: Glyceraldehyde-3-phosphate dehydrogenase A, chloroplastic (374 aa).

The transit peptide at 1-34 (MAAMMQKSAFTGSAVSSKSGVRAKAARAVVDVRA) directs the protein to the chloroplast. Residues 47–48 (RI), aspartate 71, and arginine 116 each bind NADP(+). A disulfide bridge links cysteine 55 with cysteine 325. Residues 189-191 (SCT), threonine 220, arginine 235, 248-249 (TG), and arginine 271 each bind D-glyceraldehyde 3-phosphate. The Nucleophile role is filled by cysteine 190. Asparagine 353 is an NADP(+) binding site.

The protein belongs to the glyceraldehyde-3-phosphate dehydrogenase family. Homotetramer. Component of a complex that contains two dimers of PRK, two tetramers of GAPDH and CP12. CP12 associates with GAPDH, causing its conformation to change. This GAPDH/CP12 complex binds PRK to form a half-complex (one unit). This unit probably dimerizes due partially to interactions between the enzymes of each unit.

It localises to the plastid. It is found in the chloroplast. It catalyses the reaction D-glyceraldehyde 3-phosphate + phosphate + NADP(+) = (2R)-3-phospho-glyceroyl phosphate + NADPH + H(+). It participates in carbohydrate biosynthesis; Calvin cycle. The protein is Glyceraldehyde-3-phosphate dehydrogenase A, chloroplastic (GAPA) of Chlamydomonas reinhardtii (Chlamydomonas smithii).